The sequence spans 215 residues: MVSLEARVREVKGKREARRLRRSGEVPAVVYGPATEPIPVKIKRSVLEKIFHTISEATPIQLIIKDDQGNTVAEKTVFLKMVQRDKVSETVVHLDFYEPTKGHRMRINVPLKVVGKPVGVEKGGFLEVFHEEIPVETDPDKVPQEIEVDVSSLDLGDVIHARDLKLPEGVKCLLEEEEAVVSVLVPKEVAIEEATEEEEEAAEPEVIKRKEEEEE.

The span at 192 to 203 shows a compositional bias: acidic residues; it reads EEATEEEEEAAE. Residues 192–215 form a disordered region; it reads EEATEEEEEAAEPEVIKRKEEEEE. The segment covering 205 to 215 has biased composition (basic and acidic residues); sequence EVIKRKEEEEE.

The protein belongs to the bacterial ribosomal protein bL25 family. CTC subfamily. As to quaternary structure, part of the 50S ribosomal subunit; part of the 5S rRNA/L5/L18/L25 subcomplex. Contacts the 5S rRNA. Binds to the 5S rRNA independently of L5 and L18.

In terms of biological role, this is one of the proteins that binds to the 5S RNA in the ribosome where it forms part of the central protuberance. The chain is Large ribosomal subunit protein bL25 from Thermotoga sp. (strain RQ2).